We begin with the raw amino-acid sequence, 246 residues long: Transcription factor A, mitochondrial (246 aa).

The transit peptide at 1 to 42 (MALLRGVWGVLNALGKSGADLCAGCGSRLRYPFSFAYVPKWF) directs the protein to the mitochondrion. Positions 50 to 118 (PKKPMTSYVR…VYKEEINRIQ (69 aa)) form a DNA-binding region, HMG box 1. A phosphoserine; by PKA mark is found at serine 56 and serine 61. Phosphothreonine is present on threonine 122. The segment at residues 155-219 (PKRPRSAYNI…RYYNEMKSWE (65 aa)) is a DNA-binding region (HMG box 2). Phosphoserine; by PKA is present on serine 160. Residues serine 193 and serine 195 each carry the phosphoserine modification.

In terms of assembly, monomer; binds DNA as a monomer. Homodimer. Component of the mitochondrial transcription initiation complex, composed at least of TFB2M, TFAM and POLRMT. In this complex TFAM recruits POLRMT to the promoter whereas TFB2M induces structural changes in POLRMT to enable promoter opening and trapping of the DNA non-template strand. Upon metabolic stress, forms a complex composed of FOXO3, SIRT3, TFAM and POLRMT. Interacts with TFB1M and TFB2M. Interacts with CLPX; this enhances DNA-binding. In terms of processing, phosphorylation by PKA within the HMG box 1 impairs DNA binding and promotes degradation by the AAA+ Lon protease.

The protein localises to the mitochondrion. The protein resides in the mitochondrion matrix. It is found in the mitochondrion nucleoid. Binds to the mitochondrial light strand promoter and functions in mitochondrial transcription regulation. Component of the mitochondrial transcription initiation complex, composed at least of TFB2M, TFAM and POLRMT that is required for basal transcription of mitochondrial DNA. In this complex, TFAM recruits POLRMT to a specific promoter whereas TFB2M induces structural changes in POLRMT to enable promoter opening and trapping of the DNA non-template strand. Required for accurate and efficient promoter recognition by the mitochondrial RNA polymerase. Promotes transcription initiation from the HSP1 and the light strand promoter by binding immediately upstream of transcriptional start sites. Is able to unwind DNA. Bends the mitochondrial light strand promoter DNA into a U-turn shape via its HMG boxes. Required for maintenance of normal levels of mitochondrial DNA. May play a role in organizing and compacting mitochondrial DNA. The sequence is that of Transcription factor A, mitochondrial from Bos taurus (Bovine).